Reading from the N-terminus, the 259-residue chain is MSKREDGRRDDELRPVVITRGFTENPAGSVLIEFGRTKVMCTASVTEGVSRWRKGSGLGWLTAEYAMLPSATHTRSDRESVKGRVGGRTQEISRLVGRSLRACIDLAALGENTIAVDCDVLQADGGTRTAAITGAYVALADAVNYLAAAGKLSDPRPLSCAIAAVSVGVVDGRVRVDLPYEEDSRAEVDMNVVATDTGTLVEVQGTGEGATFPRSTLDKLLDMALGACDTLFAAQCDALALPYPGVLPEGPPPSKAFGS.

Phosphate-binding positions include arginine 88 and glycine 126–arginine 128.

Belongs to the RNase PH family. Homohexameric ring arranged as a trimer of dimers.

The catalysed reaction is tRNA(n+1) + phosphate = tRNA(n) + a ribonucleoside 5'-diphosphate. Functionally, phosphorolytic 3'-5' exoribonuclease that plays an important role in tRNA 3'-end maturation. Removes nucleotide residues following the 3'-CCA terminus of tRNAs; can also add nucleotides to the ends of RNA molecules by using nucleoside diphosphates as substrates, but this may not be physiologically important. Probably plays a role in initiation of 16S rRNA degradation (leading to ribosome degradation) during starvation. This is Ribonuclease PH from Mycobacterium ulcerans (strain Agy99).